The sequence spans 99 residues: Keratinocyte differentiation-associated protein (99 aa).

An N-terminal signal peptide occupies residues 1-22 (MKIPVLPAVVLLSLLALHSAQG).

As to expression, highly expressed in skin, but not detectable in any other tissue examined. Expression restricted to cornified/stratified epithelia and not detected in non-cornified/stratified epithelia.

Its subcellular location is the secreted. May act as a soluble regulator of keratinocyte differentiation. May play an important role in embryonic skin morphogenesis. The sequence is that of Keratinocyte differentiation-associated protein from Canis lupus familiaris (Dog).